Here is a 1478-residue protein sequence, read N- to C-terminus: DNA-directed RNA polymerase subunit beta' (1478 aa).

Residues Asp535, Asp537, and Asp539 each coordinate Mg(2+). Positions 1034, 1109, 1116, and 1119 each coordinate Zn(2+).

Belongs to the RNA polymerase beta' chain family. In terms of assembly, the RNAP catalytic core consists of 2 alpha, 1 beta, 1 beta' and 1 omega subunit. When a sigma factor is associated with the core the holoenzyme is formed, which can initiate transcription. It depends on Mg(2+) as a cofactor. Zn(2+) is required as a cofactor.

The enzyme catalyses RNA(n) + a ribonucleoside 5'-triphosphate = RNA(n+1) + diphosphate. DNA-dependent RNA polymerase catalyzes the transcription of DNA into RNA using the four ribonucleoside triphosphates as substrates. The sequence is that of DNA-directed RNA polymerase subunit beta' from Mycoplasmopsis agalactiae (strain NCTC 10123 / CIP 59.7 / PG2) (Mycoplasma agalactiae).